The following is a 338-amino-acid chain: 3-keto-steroid reductase erg27 (338 aa).

NADP(+) is bound by residues L16, T44, K50, and D75. Residues S180 and Y203 each act as proton donor in the active site. 3 residues coordinate NADP(+): Y203, K207, and T236. Catalysis depends on K207, which acts as the Lowers pKa of active site Tyr.

It belongs to the short-chain dehydrogenases/reductases (SDR) family. ERG27 subfamily. As to quaternary structure, heterotetramer of erg25, erg26, erg27 and erg28. Erg28 acts as a scaffold to tether erg27 and other 4,4-demethylation-related enzymes, forming a demethylation enzyme complex, in the endoplasmic reticulum.

The enzyme catalyses 3-dehydro-4alpha-methylzymosterol + NADPH + H(+) = 4alpha-methylzymosterol + NADP(+). It participates in steroid biosynthesis; zymosterol biosynthesis; zymosterol from lanosterol: step 5/6. It functions in the pathway steroid metabolism; ergosterol biosynthesis. In terms of biological role, 3-keto-steroid reductase; part of the third module of ergosterol biosynthesis pathway that includes by the late steps of the pathway. Erg27 is a catalytic component of the C-4 demethylation complex that catalyze the reduction of the keto group on the C-3. The third module or late pathway involves the ergosterol synthesis itself through consecutive reactions that mainly occur in the endoplasmic reticulum (ER) membrane. Firstly, the squalene synthase erg9 catalyzes the condensation of 2 farnesyl pyrophosphate moieties to form squalene, which is the precursor of all steroids. Secondly, squalene is converted into lanosterol by the consecutive action of the squalene epoxidase erg1 and the lanosterol synthase erg7. The lanosterol 14-alpha-demethylase erg11/cyp1 catalyzes C14-demethylation of lanosterol to produce 4,4'-dimethyl cholesta-8,14,24-triene-3-beta-ol. In the next steps, a complex process involving various demethylation, reduction and desaturation reactions catalyzed by the C-14 reductase erg24 and the C-4 demethylation complex erg25-erg26-erg27 leads to the production of zymosterol. Erg28 likely functions in the C-4 demethylation complex reaction by tethering erg26 and Erg27 to the endoplasmic reticulum or to facilitate interaction between these proteins. Then, the sterol 24-C-methyltransferase erg6 catalyzes the methyl transfer from S-adenosyl-methionine to the C-24 of zymosterol to form fecosterol. The C-8 sterol isomerase erg2 catalyzes the reaction which results in unsaturation at C-7 in the B ring of sterols and thus converts fecosterol to episterol. The sterol-C5-desaturases erg31 and erg32 then catalyze the introduction of a C-5 double bond in the B ring to produce 5-dehydroepisterol. The C-22 sterol desaturase erg5 further converts 5-dehydroepisterol into ergosta-5,7,22,24(28)-tetraen-3beta-ol by forming the C-22(23) double bond in the sterol side chain. Finally, ergosta-5,7,22,24(28)-tetraen-3beta-ol is substrate of the C-24(28) sterol reductase erg4 to produce ergosterol. In the genus Schizosaccharomyces, a second route exists between lanosterol and fecosterol, via the methylation of lanosterol to eburicol by erg6, followed by C14-demethylation by erg11/cyp1 and C4-demethylation by the demethylation complex erg25-erg26-erg27. The sequence is that of 3-keto-steroid reductase erg27 from Schizosaccharomyces pombe (strain 972 / ATCC 24843) (Fission yeast).